Consider the following 170-residue polypeptide: MENIVLIGMPLSGKSTLGRELSKILKYDLIDTDTLIEEMEDKSIKEIFKIYGEDYFREKELEIINKLKKESNKVISTGGGLPIYNKNIYELKNIGFTVYLKVPLEELIKRMVKKEYDTRPLLKNNDTKFLEEMYKNRIEIYEKAHTIICNTNYEESLIKIVRAYKKWKGI.

Residue 11–16 (LSGKST) coordinates ATP. Residue Ser15 participates in Mg(2+) binding. Residues Asp33, Arg57, and Gly79 each coordinate substrate. Arg119 contacts ATP. Arg137 serves as a coordination point for substrate.

This sequence belongs to the shikimate kinase family. In terms of assembly, monomer. Requires Mg(2+) as cofactor.

It localises to the cytoplasm. The catalysed reaction is shikimate + ATP = 3-phosphoshikimate + ADP + H(+). The protein operates within metabolic intermediate biosynthesis; chorismate biosynthesis; chorismate from D-erythrose 4-phosphate and phosphoenolpyruvate: step 5/7. In terms of biological role, catalyzes the specific phosphorylation of the 3-hydroxyl group of shikimic acid using ATP as a cosubstrate. The polypeptide is Shikimate kinase (Clostridium botulinum (strain Okra / Type B1)).